We begin with the raw amino-acid sequence, 101 residues long: Urease subunit beta (101 aa).

This sequence belongs to the urease beta subunit family. Heterotrimer of UreA (gamma), UreB (beta) and UreC (alpha) subunits. Three heterotrimers associate to form the active enzyme.

The protein resides in the cytoplasm. The enzyme catalyses urea + 2 H2O + H(+) = hydrogencarbonate + 2 NH4(+). It participates in nitrogen metabolism; urea degradation; CO(2) and NH(3) from urea (urease route): step 1/1. This Cereibacter sphaeroides (strain ATCC 17029 / ATH 2.4.9) (Rhodobacter sphaeroides) protein is Urease subunit beta.